Here is a 580-residue protein sequence, read N- to C-terminus: Protein O-linked-mannose beta-1,4-N-acetylglucosaminyltransferase 2 (580 aa).

At 1–4 the chain is on the cytoplasmic side; that stretch reads MHLS. The helical; Signal-anchor for type II membrane protein transmembrane segment at 5 to 25 threads the bilayer; it reads AVFNALLVSVLAAVLWKHVRL. Residues 26-580 are Lumenal-facing; that stretch reads REHAATLEEE…PFADVLVCST (555 aa). N-linked (GlcNAc...) asparagine glycans are attached at residues N99 and N276. The Fibronectin type-III domain occupies 488–580; that stretch reads ARCQASVQGA…PFADVLVCST (93 aa).

The protein belongs to the glycosyltransferase 61 family. In terms of tissue distribution, mainly expressed in the central nervous system.

It localises to the endoplasmic reticulum membrane. It carries out the reaction 3-O-(alpha-D-mannosyl)-L-threonyl-[protein] + UDP-N-acetyl-alpha-D-glucosamine = 3-O-(N-acetyl-beta-D-glucosaminyl-(1-&gt;4)-alpha-D-mannosyl)-L-threonyl-[protein] + UDP + H(+). It participates in protein modification; protein glycosylation. Functionally, O-linked mannose beta-1,4-N-acetylglucosaminyltransferase that transfers UDP-N-acetyl-D-glucosamine to the 4-position of the mannose to generate N-acetyl-D-glucosamine-beta-1,4-O-D-mannosylprotein. Involved in the biosynthesis of the phosphorylated O-mannosyl trisaccharide (N-acetylgalactosamine-beta-3-N-acetylglucosamine-beta-4-(phosphate-6-)mannose), a carbohydrate structure present in alpha-dystroglycan (DAG1), which is required for binding laminin G-like domain-containing extracellular proteins with high affinity. The protein is Protein O-linked-mannose beta-1,4-N-acetylglucosaminyltransferase 2 (Pomgnt2) of Mus musculus (Mouse).